We begin with the raw amino-acid sequence, 65 residues long: Large ribosomal subunit protein bL35 (65 aa).

A compositionally biased stretch (basic residues) spans 1-16 (MPKMKTKKSAAKRFKV). The segment at 1-25 (MPKMKTKKSAAKRFKVRGSGSIKRG) is disordered.

Belongs to the bacterial ribosomal protein bL35 family.

This Bordetella parapertussis (strain 12822 / ATCC BAA-587 / NCTC 13253) protein is Large ribosomal subunit protein bL35.